A 568-amino-acid polypeptide reads, in one-letter code: Phosphoprotein (568 aa).

The disordered stretch occupies residues methionine 1 to leucine 25. Over residues phenylalanine 7–serine 24 the composition is skewed to basic and acidic residues. The tract at residues aspartate 33–threonine 41 is N0 binding. The tract at residues aspartate 55–asparagine 322 is disordered. Composition is skewed to basic and acidic residues over residues asparagine 56–isoleucine 105, arginine 132–arginine 144, proline 151–glutamate 167, and glutamate 175–arginine 190. Positions threonine 191–serine 216 are enriched in polar residues. The span at threonine 239 to threonine 265 shows a compositional bias: basic and acidic residues. Residues tyrosine 294–lysine 304 are compositionally biased toward low complexity. Positions phenylalanine 344 to serine 411 are multimerization. Residues glutamate 387 to glutamate 416 adopt a coiled-coil conformation. The tract at residues glutamate 412 to threonine 445 is l protein binding. Disordered stretches follow at residues arginine 434–lysine 455 and valine 494–serine 513. Over residues proline 441–valine 450 the composition is skewed to polar residues. The tract at residues aspartate 479–asparagine 568 is interaction with the nucleocapsid (N-RNA).

Belongs to the respirovirus P protein family. As to quaternary structure, homotetramer. Interacts (via multimerization domain) with polymerase L; this interaction forms the polymerase complex. Interacts (via N-terminus) with N0; this interaction allows P to chaperon N0 before encapsidation and form the N-P complex. Interacts (via C-terminus) with N-RNA template; this interaction positions the polymerase on the template.

Its function is as follows. Essential cofactor of the RNA polymerase L that plays a central role in the transcription and replication by forming the polymerase complex with RNA polymerase L and recruiting L to the genomic N-RNA template for RNA synthesis. Also plays a central role in the encapsidation of nascent RNA chains by forming the encapsidation complex with the nucleocapsid protein N (N-P complex). Acts as a chaperone for newly synthesized free N protein, so-called N0, allowing encapsidation of nascent RNA chains during replication. The nucleoprotein protein N prevents excessive phosphorylation of P, which leads to down-regulation of viral transcription/ replication. Participates, together with N, in the formation of viral factories (viroplasms), which are large inclusions in the host cytoplasm where replication takes place. Recruits host PI4KB and remodel the host endoplasmic reticulum membrane to form viral replication factories. The chain is Phosphoprotein (P/C) from Human parainfluenza 1 virus (strain CI-5/73) (HPIV-1).